Reading from the N-terminus, the 341-residue chain is Heme A synthase (341 aa).

The next 8 helical transmembrane spans lie at 7 to 27 (VTVW…IGGI), 92 to 112 (LFGR…AITK), 118 to 138 (MVAK…MGWF), 159 to 179 (LFLT…CAGV), 190 to 210 (FFTA…GALV), 253 to 273 (FLHR…PFWL), 280 to 300 (LFLA…VSVV), and 302 to 322 (IFLA…GVHM). His255 contacts heme. His308 serves as a coordination point for heme.

The protein belongs to the COX15/CtaA family. Type 2 subfamily. As to quaternary structure, interacts with CtaB. Heme b is required as a cofactor.

The protein resides in the cell membrane. It catalyses the reaction Fe(II)-heme o + 2 A + H2O = Fe(II)-heme a + 2 AH2. Its pathway is porphyrin-containing compound metabolism; heme A biosynthesis; heme A from heme O: step 1/1. Functionally, catalyzes the conversion of heme O to heme A by two successive hydroxylations of the methyl group at C8. The first hydroxylation forms heme I, the second hydroxylation results in an unstable dihydroxymethyl group, which spontaneously dehydrates, resulting in the formyl group of heme A. The chain is Heme A synthase from Anaplasma marginale (strain St. Maries).